Consider the following 194-residue polypeptide: Naphthalene 1,2-dioxygenase system, small oxygenase component (194 aa).

This sequence belongs to the bacterial ring-hydroxylating dioxygenase beta subunit family. In terms of assembly, the naphthalene dioxygenase (NDO) multicomponent enzyme system is composed of an electron transfer component and a dioxygenase component (iron sulfur protein (ISP)). The electron transfer component is composed of a ferredoxin reductase (NdoR) and a ferredoxin (NdoA), and the dioxygenase component is formed of a heterohexamer (trimer of heterodimers) of three large alpha subunits (NdoB) and three small beta subunits (NdoC).

It participates in aromatic compound metabolism; naphthalene degradation. In terms of biological role, component of the naphthalene dioxygenase (NDO) multicomponent enzyme system which catalyzes the incorporation of both atoms of molecular oxygen into naphthalene to form cis-(1R,2S)-dihydroxy-1,2-dihydronaphthalene. The beta subunit seems to have a structural role in the holoenzyme. Also able to catalyze the cis-dihydroxylation of biphenyl and phenanthrene. The sequence is that of Naphthalene 1,2-dioxygenase system, small oxygenase component from Pseudomonas putida (Arthrobacter siderocapsulatus).